We begin with the raw amino-acid sequence, 31 residues long: MSPIEPRRFCNSVLSQYLECVTQACGRTIKM.

This is an uncharacterized protein from Saccharomyces cerevisiae (strain ATCC 204508 / S288c) (Baker's yeast).